The following is a 675-amino-acid chain: Protein PALS1 (675 aa).

The tract at residues 1 to 78 is disordered; the sequence is MTTSHMNGHV…RREEEGKKQE (78 aa). The interval 1-345 is required for the correct localization of PALS1 and PATJ at cell-cell contacts and the normal formation of tight junctions and adherens junctions; it reads MTTSHMNGHV…QQIKPPPAKE (345 aa). Composition is skewed to basic and acidic residues over residues 10-36 and 54-78; these read VTEE…REMA and AQLE…KKQE. Phosphoserine occurs at positions 14 and 25. The segment at 21 to 140 is interaction with PARD6B; sequence VDLASPEEHQ…LKHIQHTLVD (120 aa). Residues Ser83 and Ser84 each carry the phosphoserine modification. L27 domains lie at 120–177 and 179–235; these read KILE…NKAS and PFPL…MQLE. Positions 181–243 are interaction with LIN7C; sequence PLISNAQDLA…LEPFTDERVY (63 aa). Positions 256–336 constitute a PDZ domain; that stretch reads IVRIEKARDI…TLTFVLIPSQ (81 aa). One can recognise an SH3 domain in the interval 345–417; it reads ETVIHVKAHF…PGKSFQQQRE (73 aa). The Guanylate kinase-like domain occupies 479-660; it reads KRPIILIGPQ…AYQELLRLIN (182 aa). 486-493 serves as a coordination point for ATP; it reads GPQNCGQN.

This sequence belongs to the MAGUK family. As to quaternary structure, heterodimer with MPP1. Forms a heterotrimeric complex composed of PALS1, LIN7B and PATJ; the N-terminal L27 domain of PALS1 interacts with the L27 domain of PATJ and the C-terminal L27 domain of PALS1 interacts with the L27 domain of LIN7B. Component of a complex composed of PALS1, CRB1 and MPP4. Component of a complex whose core is composed of ARHGAP17, AMOT, PALS1, PATJ and PARD3/PAR3. Component of a complex composed of PALS1, CRB1 and EPB41L5. Within the complex, interacts (via HOOK domain) with EPB41L5 (via FERM domain), and interacts with CRB1 (via intracellular domain). Component of a complex composed of PALS1, MPP3 and CRB1; PALS1 acts as a bridging protein between MPP3 (via guanylate kinase-like domain) and CRB1. Component of a complex composed of CRB3, PALS1 and PATJ. As part of the Crumbs complex; interacts with WWP1, the interaction is enhanced by AMOTL2 and facilitates WWP1 localization to the plasma membrane. The Crumbs complex promotes monoubiquitination of AMOTL2 by WWP1, which activates the Hippo signaling pathway. Interacts (via PDZ domain) with PATJ (via N-terminus). Interacts with EZR. Interacts (via PDZ domain) with CRB1 (via C-terminal ERLI motif). While the PDZ domain is sufficient for interaction with CRB1, the adjacent SH3 and guanylate kinase-like domains are likely to contribute to a high affinity interaction. Interacts with WWTR1/TAZ (via WW domain). Interacts with MPP7. Interacts (via PDZ domain) with CRB3 (via C-terminus). Interacts with LIN7C. Interacts with MPDZ. Interacts with PARD6B. Interacts with SC6A1. Interacts with CDH5; the interaction promotes PALS1 localization to cell junctions and is required for CDH5-mediated vascular lumen formation and endothelial cell. Interacts with NPHP1 (via coiled coil and SH3 domains). Interacts with NPHP4. Interacts with CRB2.

Its subcellular location is the golgi apparatus. It is found in the cell membrane. The protein resides in the endomembrane system. It localises to the cell junction. The protein localises to the tight junction. Its subcellular location is the adherens junction. It is found in the cell projection. The protein resides in the axon. It localises to the perikaryon. The protein localises to the apical cell membrane. Plays a role in tight junction biogenesis and in the establishment of cell polarity in epithelial cells. Also involved in adherens junction biogenesis by ensuring correct localization of the exocyst complex protein EXOC4/SEC8 which allows trafficking of adherens junction structural component CDH1 to the cell surface. Plays a role through its interaction with CDH5 in vascular lumen formation and endothelial membrane polarity. Required during embryonic and postnatal retinal development. Required for the maintenance of cerebellar progenitor cells in an undifferentiated proliferative state, preventing premature differentiation, and is required for cerebellar histogenesis, fissure formation, cerebellar layer organization and cortical development. Plays a role in neuronal progenitor cell survival, potentially via promotion of mTOR signaling. Plays a role in the radial and longitudinal extension of the myelin sheath in Schwann cells. May modulate SC6A1/GAT1-mediated GABA uptake by stabilizing the transporter. May play a role in the T-cell receptor-mediated activation of NF-kappa-B. Required for localization of EZR to the apical membrane of parietal cells and may play a role in the dynamic remodeling of the apical cytoskeleton. Required for the normal polarized localization of the vesicular marker STX4. Required for the correct trafficking of the myelin proteins PMP22 and MAG. Involved in promoting phosphorylation and cytoplasmic retention of transcriptional coactivators YAP1 and WWTR1/TAZ which leads to suppression of TGFB1-dependent transcription of target genes such as CCN2/CTGF, SERPINE1/PAI1, SNAI1/SNAIL1 and SMAD7. The chain is Protein PALS1 from Canis lupus familiaris (Dog).